The chain runs to 143 residues: Large ribosomal subunit protein uL15 (143 aa).

A disordered region spans residues 1-52; the sequence is MKLNTLAPAAGSKSAPKRLGRGIGSGLGKTSGKGHKGQKARSGGYHKVGFEG. Gly residues predominate over residues 21–31; the sequence is RGIGSGLGKTS.

The protein belongs to the universal ribosomal protein uL15 family. In terms of assembly, part of the 50S ribosomal subunit.

Its function is as follows. Binds to the 23S rRNA. This chain is Large ribosomal subunit protein uL15, found in Francisella tularensis subsp. tularensis (strain FSC 198).